Consider the following 448-residue polypeptide: Fibulin-5 (448 aa).

The signal sequence occupies residues 1 to 23; sequence MPGLKRILTVTILALWLPHPGNA. Residues 42–82 form the EGF-like 1; calcium-binding domain; that stretch reads DIDECRTIPEACRGDMMCVNQNGGYLCIPRTNPVYRGPYSN. Intrachain disulfides connect Cys-46-Cys-59, Cys-53-Cys-68, Cys-131-Cys-144, Cys-138-Cys-153, Cys-155-Cys-166, Cys-172-Cys-181, Cys-177-Cys-190, Cys-192-Cys-205, Cys-211-Cys-221, Cys-217-Cys-230, Cys-232-Cys-245, Cys-251-Cys-262, Cys-258-Cys-271, Cys-273-Cys-286, Cys-292-Cys-305, Cys-299-Cys-314, and Cys-320-Cys-332. The short motif at 54-56 is the Cell attachment site element; that stretch reads RGD. The EGF-like 2; calcium-binding domain occupies 127-167; it reads DVDECATDSHQCNPTQICINTEGGYTCSCTDGYWLLEGQCL. Residues 168-206 form the EGF-like 3; calcium-binding domain; it reads DIDECRYGYCQQLCANVPGSYSCTCNPGFTLNDDGRSCQ. Residues 207–246 form the EGF-like 4; calcium-binding domain; it reads DVNECETENPCVQTCVNTYGSFICRCDPGYELEEDGIHCS. The interaction with LOXL1 stretch occupies residues 245 to 448; that stretch reads CSDMDECSFS…LRIYVSQYPF (204 aa). The EGF-like 5; calcium-binding domain occupies 247–287; sequence DMDECSFSEFLCQHECVNQPGSYFCSCPPGYVLLDDNRSCQ. 2 N-linked (GlcNAc...) asparagine glycosylation sites follow: Asn-283 and Asn-296. Residues 288–333 enclose the EGF-like 6; calcium-binding domain; the sequence is DINECEHRNHTCTSLQTCYNLQGGFKCIDPISCEEPYLLIGENRCM.

It belongs to the fibulin family. Homodimer. Monomer, homodimerizes in presence of Ca(2+). Interacts with ELN. Interacts (via N-terminus) with the integrins ITGAV/ITGB3, ITGAV/ITGB5 and ITGA9/ITGB1. Interacts with FBN1 (via N-terminal domain). Forms a ternary complex with ELN and FBN1. Interacts with EFEMP2 with moderate affinity. Interacts with LOXL1. Post-translationally, N-glycosylated.

Its subcellular location is the secreted. It is found in the extracellular space. The protein localises to the extracellular matrix. Functionally, essential for elastic fiber formation, is involved in the assembly of continuous elastin (ELN) polymer and promotes the interaction of microfibrils and ELN. Stabilizes and organizes elastic fibers in the skin, lung and vasculature. Promotes adhesion of endothelial cells through interaction of integrins and the RGD motif. Vascular ligand for integrin receptors which may play a role in vascular development and remodeling. May act as an adapter that mediates the interaction between FBN1 and ELN. This chain is Fibulin-5 (Fbln5), found in Mus musculus (Mouse).